A 392-amino-acid polypeptide reads, in one-letter code: ATP phosphoribosyltransferase regulatory subunit (392 aa).

The protein belongs to the class-II aminoacyl-tRNA synthetase family. HisZ subfamily. As to quaternary structure, heteromultimer composed of HisG and HisZ subunits.

The protein resides in the cytoplasm. It participates in amino-acid biosynthesis; L-histidine biosynthesis; L-histidine from 5-phospho-alpha-D-ribose 1-diphosphate: step 1/9. In terms of biological role, required for the first step of histidine biosynthesis. May allow the feedback regulation of ATP phosphoribosyltransferase activity by histidine. In Prochlorococcus marinus (strain MIT 9303), this protein is ATP phosphoribosyltransferase regulatory subunit.